The sequence spans 177 residues: ATP synthase subunit delta (177 aa).

Belongs to the ATPase delta chain family. In terms of assembly, F-type ATPases have 2 components, F(1) - the catalytic core - and F(0) - the membrane proton channel. F(1) has five subunits: alpha(3), beta(3), gamma(1), delta(1), epsilon(1). F(0) has three main subunits: a(1), b(2) and c(10-14). The alpha and beta chains form an alternating ring which encloses part of the gamma chain. F(1) is attached to F(0) by a central stalk formed by the gamma and epsilon chains, while a peripheral stalk is formed by the delta and b chains.

Its subcellular location is the cell inner membrane. In terms of biological role, f(1)F(0) ATP synthase produces ATP from ADP in the presence of a proton or sodium gradient. F-type ATPases consist of two structural domains, F(1) containing the extramembraneous catalytic core and F(0) containing the membrane proton channel, linked together by a central stalk and a peripheral stalk. During catalysis, ATP synthesis in the catalytic domain of F(1) is coupled via a rotary mechanism of the central stalk subunits to proton translocation. Functionally, this protein is part of the stalk that links CF(0) to CF(1). It either transmits conformational changes from CF(0) to CF(1) or is implicated in proton conduction. The sequence is that of ATP synthase subunit delta from Haemophilus influenzae (strain PittGG).